The following is a 436-amino-acid chain: MTQQTFTQYDFKPFLIDAVRELRFTEPTGIQQKIFPVVKKGVSVIGQSQTGSGKTHAYLLPTLNRINASREEVQLVITAPTRELAQQIYEEIVKLTKFCAEDQMITARCLIGGTDKQRSIEKLKKQPHIVVGTPGRIKDLVEEQALFVHKANTIIVDEADLMLDMGFIHDVDKIAARMPKNLQMLVFSATIPQKLKPFLKKYMENPEHIHINPKQVAAGNIEHYLVPSKHRNKIDLVHKMLLQFKPYLAVVFTNTKKMADQVADGLMERGLKVGRIHGDLSPRDRKKMMKQIRDLEFQYIVATDLAARGIDIQGISHVINYQPPSDLDFFVHRVARTARAGHSGIAVTIYDPANEEALDSLEKQRHIEFKHVDLRGDEWADLGERRRRKSRKKPNDELDVMATKVIKKPKKVKPNYKRKLATERDKVKRKYSNKKR.

Residues 4–32 carry the Q motif motif; sequence QTFTQYDFKPFLIDAVRELRFTEPTGIQQ. One can recognise a Helicase ATP-binding domain in the interval 35–209; the sequence is FPVVKKGVSV…KKYMENPEHI (175 aa). 48–55 provides a ligand contact to ATP; sequence SQTGSGKT. Residues 157-160 carry the DEAD box motif; that stretch reads DEAD. A Helicase C-terminal domain is found at 240–388; it reads MLLQFKPYLA…WADLGERRRR (149 aa). Residues 385-436 are disordered; sequence RRRRKSRKKPNDELDVMATKVIKKPKKVKPNYKRKLATERDKVKRKYSNKKR. 2 stretches are compositionally biased toward basic residues: residues 405–419 and 427–436; these read VIKK…YKRK and VKRKYSNKKR.

This sequence belongs to the DEAD box helicase family. CshB subfamily.

The protein resides in the cytoplasm. The enzyme catalyses ATP + H2O = ADP + phosphate + H(+). Its function is as follows. Probable DEAD-box RNA helicase. May work in conjunction with the cold shock proteins to ensure proper initiation of transcription at low and optimal temperatures. Unwinds dsRNA in both 5'- and 3'-directions and shows RNA-dependent ATPase activity. Probably has a somewhat redundant function with CshA, as cshA can partially complement the growth effects of a cshB deletion. This chain is DEAD-box ATP-dependent RNA helicase CshB, found in Bacillus cereus (strain ATCC 14579 / DSM 31 / CCUG 7414 / JCM 2152 / NBRC 15305 / NCIMB 9373 / NCTC 2599 / NRRL B-3711).